A 609-amino-acid polypeptide reads, in one-letter code: UvrABC system protein C (609 aa).

Positions 15–92 (TGSGVYQMQD…IKQFRPRYNV (78 aa)) constitute a GIY-YIG domain. One can recognise a UVR domain in the interval 202–237 (DQVIIKLTERMEVASENLVFEEAAHYRDQIRQLRRL).

It belongs to the UvrC family. In terms of assembly, interacts with UvrB in an incision complex.

The protein localises to the cytoplasm. Functionally, the UvrABC repair system catalyzes the recognition and processing of DNA lesions. UvrC both incises the 5' and 3' sides of the lesion. The N-terminal half is responsible for the 3' incision and the C-terminal half is responsible for the 5' incision. The protein is UvrABC system protein C of Coxiella burnetii (strain CbuG_Q212) (Coxiella burnetii (strain Q212)).